The following is a 1061-amino-acid chain: NACHT, LRR and PYD domains-containing protein 12 (1061 aa).

A Pyrin domain is found at 1 to 95 (MLRTAGRDGL…WERGQREDLV (95 aa)). The FISNA domain occupies 129-201 (YRDYVRRKFR…SPIKIETLFE (73 aa)). An NACHT domain is found at 211–528 (RTVVMQGAAG…EFFAAMYYIL (318 aa)). 217–224 (GAAGIGKS) contacts ATP. LRR repeat units lie at residues 828-848 (HLVELDLTGNALEDLGLRLLC), 857-878 (RLRTLWLKICRLTAAACDELAS), 885-906 (SLRELDLSLNELGDLGVLLLCE), 914-935 (KLQTLRLGICRLGSAACEGLSV), 942-962 (NLRELDLSFNDLGDWGLWLLA), 971-992 (RLQKLWLDSCGLTAKACENLYF), 999-1020 (TLTDLYLTNNALGDTGVRLLCK), and 1028-1049 (KLRVLWLFGMDLNKMTHSRLAA).

Belongs to the NLRP family. As to quaternary structure, interacts (via pyrin domain) with ASC. Interacts (via pyrin domain) with FAF1 (via UBA domain). Interacts with MAP3K14; this interaction promotes proteasomal degradation of MAP3K14. Interacts with NOD2; this interaction promotes degradation of NOD2 through the ubiquitin-proteasome pathway. Interacts with HSPA1A and HSPA8. Interacts with HSP90AA1. Interacts with TRIM25; this interaction inhibits RIGI-mediated signaling pathway. As to expression, detected only in peripheral blood leukocytes, predominantly in eosinophils and granulocytes, and at lower levels in monocytes.

The protein localises to the cytoplasm. In terms of biological role, plays an essential role as an potent mitigator of inflammation. Primarily expressed in dendritic cells and macrophages, inhibits both canonical and non-canonical NF-kappa-B and ERK activation pathways. Functions as a negative regulator of NOD2 by targeting it to degradation via the proteasome pathway. In turn, promotes bacterial tolerance. Also inhibits the RIGI-mediated immune signaling against RNA viruses by reducing the E3 ubiquitin ligase TRIM25-mediated 'Lys-63'-linked RIGI activation but enhancing the E3 ubiquitin ligase RNF125-mediated 'Lys-48'-linked RIGI degradation. Also acts as a negative regulator of inflammatory response to mitigate obesity and obesity-associated diseases in adipose tissue. The polypeptide is NACHT, LRR and PYD domains-containing protein 12 (NLRP12) (Homo sapiens (Human)).